A 320-amino-acid chain; its full sequence is Malate dehydrogenase (320 aa).

NAD(+)-binding positions include 10–15 and Asp34; that span reads GSGMIG. 2 residues coordinate substrate: Arg83 and Arg89. NAD(+) is bound by residues Asn96 and 119-121; that span reads ITN. The substrate site is built by Asn121 and Arg152. Catalysis depends on His176, which acts as the Proton acceptor.

It belongs to the LDH/MDH superfamily. MDH type 3 family.

It catalyses the reaction (S)-malate + NAD(+) = oxaloacetate + NADH + H(+). In terms of biological role, catalyzes the reversible oxidation of malate to oxaloacetate. This chain is Malate dehydrogenase, found in Agrobacterium fabrum (strain C58 / ATCC 33970) (Agrobacterium tumefaciens (strain C58)).